Reading from the N-terminus, the 278-residue chain is MNSRRRPVKKDSEALEISIPFDETPHLDPQIFYSLSPSRGNFEEPSEAASPTAALMNGVRAQLHLALERNSWLQKRIEDLEEERDFLRCQLDKFISSARLDADDHCRGKPGPRRAEGDGRGGTGGEASDPESAASSLSGASEEGSTVERKRQKQKGGPGRRRFGKPKARERQRVKDADGVLCRYKKILGTFQKLKSMSRAFEHHRVDRNTVALTTPIAELLIVAPEKLAEVGEFDPSKERLLEYSRRCFLALDEETLKKVQALKKSKLLLPITYRFKR.

Residues 61–99 adopt a coiled-coil conformation; it reads AQLHLALERNSWLQKRIEDLEEERDFLRCQLDKFISSAR. Basic and acidic residues predominate over residues 102–119; sequence ADDHCRGKPGPRRAEGDG. Residues 102 to 174 are disordered; that stretch reads ADDHCRGKPG…KPKARERQRV (73 aa). The residue at position 128 (serine 128) is a Phosphoserine. The span at 131 to 144 shows a compositional bias: low complexity; that stretch reads ESAASSLSGASEEG. Residues 150 to 166 show a composition bias toward basic residues; the sequence is KRQKQKGGPGRRRFGKP. The Bipartite nuclear localization signal signature appears at 151–164; it reads RQKQKGGPGRRRFG.

Interacts with p53/TP53.

It localises to the nucleus. Functionally, promotes the degradation of p53/TP53 protein and inhibits its transactivity. The sequence is that of Coiled-coil domain-containing protein 106 (CCDC106) from Bos taurus (Bovine).